A 102-amino-acid chain; its full sequence is Small ribosomal subunit protein uS10 (102 aa).

This sequence belongs to the universal ribosomal protein uS10 family. As to quaternary structure, part of the 30S ribosomal subunit.

Functionally, involved in the binding of tRNA to the ribosomes. The polypeptide is Small ribosomal subunit protein uS10 (Rhizobium etli (strain CIAT 652)).